Here is a 128-residue protein sequence, read N- to C-terminus: D-ribose pyranase (128 aa).

Catalysis depends on His20, which acts as the Proton donor. Substrate contacts are provided by residues Asp28, His95, and 117–119 (YSN).

It belongs to the RbsD / FucU family. RbsD subfamily. Homodecamer.

Its subcellular location is the cytoplasm. It carries out the reaction beta-D-ribopyranose = beta-D-ribofuranose. It participates in carbohydrate metabolism; D-ribose degradation; D-ribose 5-phosphate from beta-D-ribopyranose: step 1/2. Its function is as follows. Catalyzes the interconversion of beta-pyran and beta-furan forms of D-ribose. The polypeptide is D-ribose pyranase (Thermosipho africanus (strain TCF52B)).